The chain runs to 222 residues: Protein-L-isoaspartate O-methyltransferase (222 aa).

S68 is an active-site residue.

This sequence belongs to the methyltransferase superfamily. L-isoaspartyl/D-aspartyl protein methyltransferase family.

It is found in the cytoplasm. The catalysed reaction is [protein]-L-isoaspartate + S-adenosyl-L-methionine = [protein]-L-isoaspartate alpha-methyl ester + S-adenosyl-L-homocysteine. Catalyzes the methyl esterification of L-isoaspartyl residues in peptides and proteins that result from spontaneous decomposition of normal L-aspartyl and L-asparaginyl residues. It plays a role in the repair and/or degradation of damaged proteins. The polypeptide is Protein-L-isoaspartate O-methyltransferase (Koribacter versatilis (strain Ellin345)).